An 861-amino-acid polypeptide reads, in one-letter code: MSDADDNNSSGRRPLSLKRSGGGTVQQSFARGRSKAVVVEKKRKRVATPAKDGGPGGKQGGGAKGGESALAAKARQLGLSEEELVARQRAIARARAEAADREAQKKQDAAAMAQRAASEQRQLEEQRERVAREAREAEEAAQKAIEDEARLKAEAEAATAAKDSGRKRDDESSRRRPPAKDEKRTPEVVPMDEASALEALGGRVKRKGGAAGPGPAAKQQPARAKTDNRRRGKLTIQNILEGDEERQRSLASVRRAREREKQRRQDTSGGREKIEREVVVPEAITVADLANRMAERSVDVIKYMMKQGQMVRMNDVLDADTAELVVEDFGHIVKRVSEADVEQGFIDDDDADEAKLPRAPVIAVMGHVDHGKTSLLDALRSTDIASGEAGGITQHIGAYQVELKGGQKITFLDTPGHAAFSAMRSRGAMATDIVILVVAADDSVKPQTIEAIHHAKAAGTPIIVAVNKCDKHEANPQKVLTDLLQHEIVVEAMSGEVQSVNVSAKTREGLDELTEAIALQAELLDLKANPERSAEGIVIESQVDKGRGPVATLLVRRGTLKRGEIVVAGAQWGRVRALVDARGQQLPEAGPSLAVEILGLDGAPDPGELFAVVDSESRAREIADYRQRKGREATGGSSPASASLEQMMARLKQDETQEMPLLVKSDVQGSAEAIKQSLEGIGNDEVRARIIRAAPGGVNESDVLLAKSSGAPVFAFNVRANKQARELAEREGVEIRYYSVIYDVIDDVRNTMEGMLAPEKRENFIGYAEILEVFNITKTGKVAGCRVTEGVVRRGCGVRLLRDDTVLHEGKLKTLKRFKDEVSDVRAGTECGMAFEKYEDLRKGDQIECFEVIEVARKLEA.

2 disordered regions span residues 1–69 (MSDA…GESA) and 92–273 (ARAR…GREK). A compositionally biased stretch (gly residues) spans 53–65 (GGPGGKQGGGAKG). The segment covering 94–108 (ARAEAADREAQKKQD) has biased composition (basic and acidic residues). A compositionally biased stretch (low complexity) spans 109-120 (AAAMAQRAASEQ). Composition is skewed to basic and acidic residues over residues 121–155 (RQLEEQRERVAREAREAEEAAQKAIEDEARLKAEA) and 163–186 (DSGRKRDDESSRRRPPAKDEKRTP). A compositionally biased stretch (low complexity) spans 213–223 (PGPAAKQQPAR). Residues 255 to 273 (RAREREKQRRQDTSGGREK) are compositionally biased toward basic and acidic residues. Positions 357-527 (PRAPVIAVMG…ALQAELLDLK (171 aa)) constitute a tr-type G domain. The tract at residues 366-373 (GHVDHGKT) is G1. A GTP-binding site is contributed by 366–373 (GHVDHGKT). Positions 391–395 (GITQH) are G2. The interval 413 to 416 (DTPG) is G3. Residues 413–417 (DTPGH) and 467–470 (NKCD) each bind GTP. The interval 467 to 470 (NKCD) is G4. The segment at 503 to 505 (SAK) is G5.

It belongs to the TRAFAC class translation factor GTPase superfamily. Classic translation factor GTPase family. IF-2 subfamily.

It is found in the cytoplasm. In terms of biological role, one of the essential components for the initiation of protein synthesis. Protects formylmethionyl-tRNA from spontaneous hydrolysis and promotes its binding to the 30S ribosomal subunits. Also involved in the hydrolysis of GTP during the formation of the 70S ribosomal complex. The chain is Translation initiation factor IF-2 from Maricaulis maris (strain MCS10) (Caulobacter maris).